Reading from the N-terminus, the 101-residue chain is Integration host factor subunit beta (101 aa).

It belongs to the bacterial histone-like protein family. Heterodimer of an alpha and a beta chain.

In terms of biological role, this protein is one of the two subunits of integration host factor, a specific DNA-binding protein that functions in genetic recombination as well as in transcriptional and translational control. This chain is Integration host factor subunit beta, found in Janthinobacterium sp. (strain Marseille) (Minibacterium massiliensis).